The primary structure comprises 160 residues: SsrA-binding protein (160 aa).

It belongs to the SmpB family.

Its subcellular location is the cytoplasm. Functionally, required for rescue of stalled ribosomes mediated by trans-translation. Binds to transfer-messenger RNA (tmRNA), required for stable association of tmRNA with ribosomes. tmRNA and SmpB together mimic tRNA shape, replacing the anticodon stem-loop with SmpB. tmRNA is encoded by the ssrA gene; the 2 termini fold to resemble tRNA(Ala) and it encodes a 'tag peptide', a short internal open reading frame. During trans-translation Ala-aminoacylated tmRNA acts like a tRNA, entering the A-site of stalled ribosomes, displacing the stalled mRNA. The ribosome then switches to translate the ORF on the tmRNA; the nascent peptide is terminated with the 'tag peptide' encoded by the tmRNA and targeted for degradation. The ribosome is freed to recommence translation, which seems to be the essential function of trans-translation. This chain is SsrA-binding protein, found in Proteus mirabilis (strain HI4320).